The chain runs to 110 residues: Large ribosomal subunit protein uL22 (110 aa).

It belongs to the universal ribosomal protein uL22 family. Part of the 50S ribosomal subunit.

In terms of biological role, this protein binds specifically to 23S rRNA; its binding is stimulated by other ribosomal proteins, e.g. L4, L17, and L20. It is important during the early stages of 50S assembly. It makes multiple contacts with different domains of the 23S rRNA in the assembled 50S subunit and ribosome. Its function is as follows. The globular domain of the protein is located near the polypeptide exit tunnel on the outside of the subunit, while an extended beta-hairpin is found that lines the wall of the exit tunnel in the center of the 70S ribosome. This chain is Large ribosomal subunit protein uL22, found in Desulfotalea psychrophila (strain LSv54 / DSM 12343).